Here is a 443-residue protein sequence, read N- to C-terminus: Phosphoglucosamine mutase (443 aa).

Serine 101 serves as the catalytic Phosphoserine intermediate. The Mg(2+) site is built by serine 101, aspartate 239, aspartate 241, and aspartate 243. Serine 101 bears the Phosphoserine mark.

It belongs to the phosphohexose mutase family. It depends on Mg(2+) as a cofactor. Post-translationally, activated by phosphorylation.

The catalysed reaction is alpha-D-glucosamine 1-phosphate = D-glucosamine 6-phosphate. Its function is as follows. Catalyzes the conversion of glucosamine-6-phosphate to glucosamine-1-phosphate. The protein is Phosphoglucosamine mutase of Francisella philomiragia subsp. philomiragia (strain ATCC 25017 / CCUG 19701 / FSC 153 / O#319-036).